The sequence spans 252 residues: tRNA (guanine-N(1)-)-methyltransferase (252 aa).

S-adenosyl-L-methionine is bound by residues Gly113 and 133 to 138 (IGDYVL).

The protein belongs to the RNA methyltransferase TrmD family. In terms of assembly, homodimer.

The protein localises to the cytoplasm. The catalysed reaction is guanosine(37) in tRNA + S-adenosyl-L-methionine = N(1)-methylguanosine(37) in tRNA + S-adenosyl-L-homocysteine + H(+). Specifically methylates guanosine-37 in various tRNAs. This Nitrosococcus oceani (strain ATCC 19707 / BCRC 17464 / JCM 30415 / NCIMB 11848 / C-107) protein is tRNA (guanine-N(1)-)-methyltransferase.